Reading from the N-terminus, the 180-residue chain is Large ribosomal subunit protein uL6 (180 aa).

Belongs to the universal ribosomal protein uL6 family. Part of the 50S ribosomal subunit.

Its function is as follows. This protein binds to the 23S rRNA, and is important in its secondary structure. It is located near the subunit interface in the base of the L7/L12 stalk, and near the tRNA binding site of the peptidyltransferase center. This Anaeromyxobacter dehalogenans (strain 2CP-1 / ATCC BAA-258) protein is Large ribosomal subunit protein uL6.